The following is a 362-amino-acid chain: Dihydroorotate dehydrogenase (quinone) (362 aa).

FMN-binding positions include 62 to 66 and T86; that span reads AGYDK. K66 is a binding site for substrate. Substrate is bound at residue 111 to 115; that stretch reads NRLGF. 2 residues coordinate FMN: N139 and N170. N170 is a binding site for substrate. Residue S173 is the Nucleophile of the active site. Residue N175 participates in substrate binding. Residues K215 and S243 each coordinate FMN. 244-245 is a binding site for substrate; the sequence is NT. Residues G266, G295, and 316–317 contribute to the FMN site; that span reads YS.

This sequence belongs to the dihydroorotate dehydrogenase family. Type 2 subfamily. Monomer. FMN serves as cofactor.

Its subcellular location is the cell membrane. It carries out the reaction (S)-dihydroorotate + a quinone = orotate + a quinol. Its pathway is pyrimidine metabolism; UMP biosynthesis via de novo pathway; orotate from (S)-dihydroorotate (quinone route): step 1/1. In terms of biological role, catalyzes the conversion of dihydroorotate to orotate with quinone as electron acceptor. This is Dihydroorotate dehydrogenase (quinone) from Sinorhizobium fredii (strain NBRC 101917 / NGR234).